A 210-amino-acid chain; its full sequence is N-(5'-phosphoribosyl)anthranilate isomerase (210 aa).

The protein belongs to the TrpF family.

It carries out the reaction N-(5-phospho-beta-D-ribosyl)anthranilate = 1-(2-carboxyphenylamino)-1-deoxy-D-ribulose 5-phosphate. The protein operates within amino-acid biosynthesis; L-tryptophan biosynthesis; L-tryptophan from chorismate: step 3/5. This chain is N-(5'-phosphoribosyl)anthranilate isomerase, found in Crocosphaera subtropica (strain ATCC 51142 / BH68) (Cyanothece sp. (strain ATCC 51142)).